Reading from the N-terminus, the 181-residue chain is Large ribosomal subunit protein uL6 (181 aa).

Belongs to the universal ribosomal protein uL6 family. Part of the 50S ribosomal subunit.

In terms of biological role, this protein binds to the 23S rRNA, and is important in its secondary structure. It is located near the subunit interface in the base of the L7/L12 stalk, and near the tRNA binding site of the peptidyltransferase center. The polypeptide is Large ribosomal subunit protein uL6 (Lawsonia intracellularis (strain PHE/MN1-00)).